The following is a 594-amino-acid chain: UV-stimulated scaffold protein A homolog (594 aa).

Positions 24–170 (RKNLNRFIRE…VTLKKTKFVD (147 aa)) are VHS-like. A coiled-coil region spans residues 170–198 (DYENGAKKIEAERKRKKILEERKMKMIEN). A UVSSA-type zinc finger spans residues 466 to 493 (RKVCLAKMKSGKLCPRKDYYTCPLHGKI). Zn(2+) contacts are provided by Cys469, Cys479, Cys487, and His490. A coiled-coil region spans residues 503–540 (INEEDRLEENYRKEQNHLKEADKIRQMIEKEYESKTKR). Residues 533-558 (EYESKTKRRKKHDVDTTASEDVRNRL) are disordered. Residues 544–558 (HDVDTTASEDVRNRL) are compositionally biased toward basic and acidic residues.

It belongs to the UVSSA family.

It localises to the chromosome. Its function is as follows. Factor involved in transcription-coupled nucleotide excision repair (TC-NER) in response to UV damage. TC-NER allows RNA polymerase II-blocking lesions to be rapidly removed from the transcribed strand of active genes. This chain is UV-stimulated scaffold protein A homolog, found in Caenorhabditis elegans.